The sequence spans 147 residues: UPF0306 protein YhbP (147 aa).

This sequence belongs to the UPF0306 family.

This Escherichia coli O7:K1 (strain IAI39 / ExPEC) protein is UPF0306 protein YhbP.